The chain runs to 506 residues: Probable cytochrome P450 519E1 (506 aa).

Residues 1–21 traverse the membrane as a helical segment; sequence MGIGLIILYLLIGLLAYDFTK. Heme is bound at residue cysteine 453.

Belongs to the cytochrome P450 family. The cofactor is heme.

Its subcellular location is the membrane. The sequence is that of Probable cytochrome P450 519E1 (cyp519E1) from Dictyostelium discoideum (Social amoeba).